The primary structure comprises 425 residues: Stabilizer of axonemal microtubules 4 (425 aa).

3 disordered regions span residues 93 to 126 (PLEV…PPTK), 203 to 225 (EGSG…SQAL), and 316 to 335 (KEPT…PCDP). Over residues 207–222 (FTKQSHQSPIVFQPPS) the composition is skewed to polar residues.

In terms of assembly, microtubule inner protein component of sperm flagellar doublet microtubules. Interacts with PPP1CA.

The protein localises to the cell projection. It localises to the cilium. The protein resides in the cytoplasm. It is found in the cytoskeleton. Its subcellular location is the flagellum axoneme. The sequence is that of Stabilizer of axonemal microtubules 4 from Homo sapiens (Human).